We begin with the raw amino-acid sequence, 514 residues long: 2,3-bisphosphoglycerate-independent phosphoglycerate mutase (514 aa).

Mn(2+)-binding residues include aspartate 14 and serine 64. Serine 64 functions as the Phosphoserine intermediate in the catalytic mechanism. Substrate-binding positions include histidine 125, 155–156, arginine 187, arginine 193, 263–266, and lysine 336; these read RD and RADR. Positions 403, 407, 444, 445, and 463 each coordinate Mn(2+).

It belongs to the BPG-independent phosphoglycerate mutase family. In terms of assembly, monomer. It depends on Mn(2+) as a cofactor.

It carries out the reaction (2R)-2-phosphoglycerate = (2R)-3-phosphoglycerate. Its pathway is carbohydrate degradation; glycolysis; pyruvate from D-glyceraldehyde 3-phosphate: step 3/5. Catalyzes the interconversion of 2-phosphoglycerate and 3-phosphoglycerate. The chain is 2,3-bisphosphoglycerate-independent phosphoglycerate mutase from Shigella dysenteriae serotype 1 (strain Sd197).